A 623-amino-acid polypeptide reads, in one-letter code: Leucine aminopeptidase 2 (623 aa).

A peptide-binding positions include 140-142 (QLE) and 266-271 (PYGGME). His-295 lines the Zn(2+) pocket. Glu-296 functions as the Proton acceptor in the catalytic mechanism. His-299 and Glu-318 together coordinate Zn(2+). The Proton donor role is filled by Tyr-382.

This sequence belongs to the peptidase M1 family. Requires Zn(2+) as cofactor.

It is found in the cytoplasm. It localises to the nucleus. It catalyses the reaction an epoxide + H2O = an ethanediol. Aminopeptidase that preferentially cleaves di- and tripeptides. Also has low epoxide hydrolase activity (in vitro). Can hydrolyze the epoxide leukotriene LTA(4) but it forms preferentially 5,6-dihydroxy-7,9,11,14-eicosatetraenoic acid rather than the cytokine leukotriene B(4) as the product compared to the homologous mammalian enzyme (in vitro). In Eremothecium gossypii (strain ATCC 10895 / CBS 109.51 / FGSC 9923 / NRRL Y-1056) (Yeast), this protein is Leucine aminopeptidase 2.